A 104-amino-acid chain; its full sequence is NADH-quinone oxidoreductase subunit K (104 aa).

The next 3 helical transmembrane spans lie at 4–24 (VPAS…LFGA), 31–51 (VIVL…FVAF), and 67–87 (LFTM…LIAL).

The protein belongs to the complex I subunit 4L family. NDH-1 is composed of 14 different subunits. Subunits NuoA, H, J, K, L, M, N constitute the membrane sector of the complex.

It is found in the cell membrane. It carries out the reaction a quinone + NADH + 5 H(+)(in) = a quinol + NAD(+) + 4 H(+)(out). Functionally, NDH-1 shuttles electrons from NADH, via FMN and iron-sulfur (Fe-S) centers, to quinones in the respiratory chain. The immediate electron acceptor for the enzyme in this species is believed to be a menaquinone. Couples the redox reaction to proton translocation (for every two electrons transferred, four hydrogen ions are translocated across the cytoplasmic membrane), and thus conserves the redox energy in a proton gradient. This chain is NADH-quinone oxidoreductase subunit K, found in Bacillus anthracis (strain A0248).